A 410-amino-acid chain; its full sequence is Arginine deiminase (410 aa).

Residue C400 is the Amidino-cysteine intermediate of the active site.

It belongs to the arginine deiminase family.

The protein localises to the cytoplasm. The enzyme catalyses L-arginine + H2O = L-citrulline + NH4(+). It participates in amino-acid degradation; L-arginine degradation via ADI pathway; carbamoyl phosphate from L-arginine: step 1/2. This is Arginine deiminase from Lactococcus lactis subsp. cremoris (strain MG1363).